We begin with the raw amino-acid sequence, 376 residues long: Growth/differentiation factor 8 (376 aa).

A signal peptide spans 1-24 (MIQKPQMYVYIYLFVLIAAGPVDL). Positions 25–267 (NEDSEREANV…VTDTPKRSRR (243 aa)) are excised as a propeptide. N-linked (GlcNAc...) asparagine glycosylation is present at Asn-72. 4 cysteine pairs are disulfide-bonded: Cys-273-Cys-283, Cys-282-Cys-341, Cys-310-Cys-373, and Cys-314-Cys-375.

This sequence belongs to the TGF-beta family. As to quaternary structure, homodimer; disulfide-linked. Interacts with WFIKKN2, leading to inhibit its activity. Interacts with FSTL3. In terms of processing, synthesized as large precursor molecule that undergoes proteolytic cleavage to generate an N-terminal propeptide and a disulfide linked C-terminal dimer, which is the biologically active molecule. The circulating form consists of a latent complex of the C-terminal dimer and other proteins, including its propeptide, which maintain the C-terminal dimer in a latent, inactive state. Ligand activation requires additional cleavage of the prodomain by a tolloid-like metalloproteinase.

The protein localises to the secreted. Functionally, acts specifically as a negative regulator of skeletal muscle growth. In Rattus norvegicus (Rat), this protein is Growth/differentiation factor 8 (Mstn).